An 88-amino-acid chain; its full sequence is Sec-independent protein translocase protein TatA (88 aa).

Residues 1-21 (MGGISIWQLLIIALIVVLLFG) traverse the membrane as a helical segment. Residues 43 to 88 (MSSEEDKKALEDAEAAKPVQTAQTVQSAQPTQQATEKKPESNKEQA) form a disordered region. Basic and acidic residues predominate over residues 46–57 (EEDKKALEDAEA). Residues 62–76 (QTAQTVQSAQPTQQA) show a composition bias toward polar residues. Residues 77-88 (TEKKPESNKEQA) are compositionally biased toward basic and acidic residues.

The protein belongs to the TatA/E family. In terms of assembly, the Tat system comprises two distinct complexes: a TatABC complex, containing multiple copies of TatA, TatB and TatC subunits, and a separate TatA complex, containing only TatA subunits. Substrates initially bind to the TatABC complex, which probably triggers association of the separate TatA complex to form the active translocon.

It localises to the cell inner membrane. Its function is as follows. Part of the twin-arginine translocation (Tat) system that transports large folded proteins containing a characteristic twin-arginine motif in their signal peptide across membranes. TatA could form the protein-conducting channel of the Tat system. This Shewanella oneidensis (strain ATCC 700550 / JCM 31522 / CIP 106686 / LMG 19005 / NCIMB 14063 / MR-1) protein is Sec-independent protein translocase protein TatA.